The sequence spans 219 residues: 7-cyano-7-deazaguanine synthase (219 aa).

10 to 20 (FSGGQDSTTCL) is a binding site for ATP. Residues Cys188, Cys196, Cys199, and Cys202 each coordinate Zn(2+).

The protein belongs to the QueC family. The cofactor is Zn(2+).

It catalyses the reaction 7-carboxy-7-deazaguanine + NH4(+) + ATP = 7-cyano-7-deazaguanine + ADP + phosphate + H2O + H(+). Its pathway is purine metabolism; 7-cyano-7-deazaguanine biosynthesis. In terms of biological role, catalyzes the ATP-dependent conversion of 7-carboxy-7-deazaguanine (CDG) to 7-cyano-7-deazaguanine (preQ(0)). This Neisseria meningitidis serogroup C / serotype 2a (strain ATCC 700532 / DSM 15464 / FAM18) protein is 7-cyano-7-deazaguanine synthase.